A 333-amino-acid chain; its full sequence is ATP synthase subunit a (333 aa).

The signal sequence occupies residues 1-32; it reads MIYLHNKRKGMLKRLSALIVIGLLMNLPAVFA. The next 7 helical transmembrane spans lie at 100–120, 161–181, 185–205, 229–249, 254–274, 279–299, and 300–320; these read HVVMMWIAAAILLLIMFGVGN, FMPFLLTIFFFILVCNLIGLV, ATATGNINVTATLAIFTFLVT, LMWIIMVPVEFIGLFTKPFAL, FANMTAGHIVIISLLGLIFVF, IAPVSVAFALFIYLLEILVAF, and LQAYIFTLLSALFIGMAVAHE.

This sequence belongs to the ATPase A chain family. As to quaternary structure, F-type ATPases have 2 components, CF(1) - the catalytic core - and CF(0) - the membrane proton channel. CF(1) has five subunits: alpha(3), beta(3), gamma(1), delta(1), epsilon(1). CF(0) has four main subunits: a, b, b' and c.

Its subcellular location is the cell inner membrane. In terms of biological role, key component of the proton channel; it plays a direct role in the translocation of protons across the membrane. This chain is ATP synthase subunit a, found in Chloroherpeton thalassium (strain ATCC 35110 / GB-78).